A 429-amino-acid chain; its full sequence is Forkhead box protein A1-A (429 aa).

The segment at residues 159 to 253 (KPPYSYISLI…ENGCYLRRQK (95 aa)) is a DNA-binding region (fork-head). The segment covering 258–274 (EKTQGGKGNQDGRKDHS) has biased composition (basic and acidic residues). Positions 258–341 (EKTQGGKGNQ…HSTHSLAHES (84 aa)) are disordered. The span at 287–304 (SSQMDSSSSMSNPSSSPQ) shows a compositional bias: low complexity. Residues 325 to 336 (PLSSHQNHSTHS) are compositionally biased toward polar residues.

As to expression, at neurula stage, expressed in the notochord but not in the neural floor plate. During tailbud stages, expressed in the neural floor plate. At stage 35, expressed in the rhombencephalon, mesencephalon, pharyngeal pouches, foregut and pronephros. At stage 44, expressed in a region of the gut on the right hand side of the embryo. Expressed in the adult lung and liver.

The protein localises to the nucleus. Probable transcription factor. The protein is Forkhead box protein A1-A (foxa1-a) of Xenopus laevis (African clawed frog).